Consider the following 251-residue polypeptide: Phosphate import ATP-binding protein PstB 2 (251 aa).

Residues 5 to 246 enclose the ABC transporter domain; the sequence is ITSKDVHLSY…PKKQITSDYL (242 aa). An ATP-binding site is contributed by 37–44; the sequence is GPSGCGKS.

Belongs to the ABC transporter superfamily. Phosphate importer (TC 3.A.1.7) family. In terms of assembly, the complex is composed of two ATP-binding proteins (PstB), two transmembrane proteins (PstC and PstA) and a solute-binding protein (PstS).

The protein localises to the cell membrane. The enzyme catalyses phosphate(out) + ATP + H2O = ADP + 2 phosphate(in) + H(+). Part of the ABC transporter complex PstSACB involved in phosphate import. Responsible for energy coupling to the transport system. This chain is Phosphate import ATP-binding protein PstB 2, found in Lactobacillus johnsonii (strain CNCM I-12250 / La1 / NCC 533).